Reading from the N-terminus, the 599-residue chain is UPF0313 protein UNCMA_01890 (599 aa).

Residues 281–557 (EDIPALRTVR…RALLQYKNPE (277 aa)) form the Radical SAM core domain. Residues Cys-299, Cys-303, and Cys-306 each contribute to the [4Fe-4S] cluster site.

The protein belongs to the UPF0313 family. It depends on [4Fe-4S] cluster as a cofactor.

This chain is UPF0313 protein UNCMA_01890, found in Methanocella arvoryzae (strain DSM 22066 / NBRC 105507 / MRE50).